Reading from the N-terminus, the 72-residue chain is Crustacean hyperglycemic hormone A (72 aa).

Glutamine 1 is subject to Pyrrolidone carboxylic acid. A D-phenylalanine; in form CHHA-II modification is found at phenylalanine 3. 3 disulfide bridges follow: cysteine 7-cysteine 43, cysteine 23-cysteine 39, and cysteine 26-cysteine 52. Valine 72 carries the post-translational modification Valine amide.

Post-translationally, stereoinversion of L-Phe (in CHHA-I) to D-Phe (in CHHA-II).

Its subcellular location is the secreted. Its function is as follows. Hormone found in the sinus gland of isopods and decapods which controls the blood sugar level. Has a secretagogue action over the amylase released from the midgut gland. May act as a stress hormone and may be involved in the control of molting and reproduction. The polypeptide is Crustacean hyperglycemic hormone A (Cherax destructor (Common yabby crayfish)).